A 315-amino-acid chain; its full sequence is PDZ domain-containing protein GIPC2 (315 aa).

Over residues 1–12 (MPLKLRGKKKAK) the composition is skewed to basic residues. The disordered stretch occupies residues 1 to 34 (MPLKLRGKKKAKSKETAGLVEGEPTGAGGGSLSA). The 81-residue stretch at 117 to 197 (EVNVYKSEDS…EELFTMKLIE (81 aa)) folds into the PDZ domain.

This sequence belongs to the GIPC family. In terms of assembly, probably interacts with SEMA5A. As to expression, expressed at highest levels in ascending colon and at moderate levels in adult kidney. Expressed at low levels in adult pancreas and at very low levels in adult liver. Expression is down-regulated in several primary tumors, such as kidney, colon and rectal tumors.

It localises to the cytoplasm. The polypeptide is PDZ domain-containing protein GIPC2 (GIPC2) (Homo sapiens (Human)).